The sequence spans 422 residues: Vitamin D3 receptor (422 aa).

The segment at residues 21–96 (PRICGVCGDR…IGMMKEFILT (76 aa)) is a DNA-binding region (nuclear receptor). Residues C24, C27, C41, C44, C60, C66, C76, and C79 each coordinate Zn(2+). 2 consecutive NR C4-type zinc fingers follow at residues 24 to 44 (CGVC…CEGC) and 60 to 84 (CPFN…LKRC). The segment at 97–126 (DEEVQRKREMIMKRKEEEALKDSLRPKLSE) is hinge. Residues 127-418 (EQQHIIAILL…LTPLVLEVFG (292 aa)) enclose the NR LBD domain. Residue Y143 coordinates calcitriol. A disordered region spans residues 161-185 (VSTGSYSPRPTLSFSGDSSSNSDLY). Over residues 162–172 (STGSYSPRPTL) the composition is skewed to polar residues. Residues 173-182 (SFSGDSSSNS) are compositionally biased toward low complexity. Residue S232 participates in calcitriol binding. The interaction with coactivator LXXLL motif stretch occupies residues 241–259 (KMIPGFRDLTSDDQIVLLK). Residues R269, S273, H300, and H392 each coordinate calcitriol. The 9aaTAD signature appears at 411–419 (PLVLEVFGN).

It belongs to the nuclear hormone receptor family. NR1 subfamily. In terms of assembly, homodimer in the absence of bound vitamin D3. Heterodimer with RXRA after vitamin D3 binding. Interacts with MED1, NCOA1, NCOA2, NCOA3 and NCOA6 coactivators, leading to a strong increase of transcription of target genes. Interacts with the corepressor NCOR1. Interacts with SNW1. Interacts with IRX4, the interaction does not affect its transactivation activity. Interacts with CRY1. Interacts with CRY2 in a ligand-dependent manner. In terms of processing, ubiquitinated by UBR5, leading to its degradation: UBR5 specifically recognizes and binds ligand-bound VDR when it is not associated with coactivators (NCOAs). In presence of NCOAs, the UBR5-degron is not accessible, preventing its ubiquitination and degradation.

It localises to the nucleus. Its subcellular location is the cytoplasm. Functionally, nuclear receptor for calcitriol, the active form of vitamin D3 which mediates the action of this vitamin on cells. Enters the nucleus upon vitamin D3 binding where it forms heterodimers with the retinoid X receptor/RXR. The VDR-RXR heterodimers bind to specific response elements on DNA and activate the transcription of vitamin D3-responsive target genes. Plays a central role in calcium homeostasis. Also functions as a receptor for the secondary bile acid lithocholic acid (LCA) and its metabolites. This chain is Vitamin D3 receptor (Vdr), found in Mus musculus (Mouse).